The chain runs to 124 residues: Small ribosomal subunit protein uS12 (124 aa).

Position 89 is a 3-methylthioaspartic acid (aspartate 89).

It belongs to the universal ribosomal protein uS12 family. In terms of assembly, part of the 30S ribosomal subunit. Contacts proteins S8 and S17. May interact with IF1 in the 30S initiation complex.

With S4 and S5 plays an important role in translational accuracy. Functionally, interacts with and stabilizes bases of the 16S rRNA that are involved in tRNA selection in the A site and with the mRNA backbone. Located at the interface of the 30S and 50S subunits, it traverses the body of the 30S subunit contacting proteins on the other side and probably holding the rRNA structure together. The combined cluster of proteins S8, S12 and S17 appears to hold together the shoulder and platform of the 30S subunit. This Photobacterium profundum (strain SS9) protein is Small ribosomal subunit protein uS12.